A 210-amino-acid polypeptide reads, in one-letter code: Orotate phosphoribosyltransferase (210 aa).

5-phospho-alpha-D-ribose 1-diphosphate-binding positions include arginine 97, lysine 98, and 125-133 (NDMVSSGKS). 2 residues coordinate orotate: serine 129 and arginine 157.

Belongs to the purine/pyrimidine phosphoribosyltransferase family. PyrE subfamily. As to quaternary structure, homodimer. Mg(2+) serves as cofactor.

It catalyses the reaction orotidine 5'-phosphate + diphosphate = orotate + 5-phospho-alpha-D-ribose 1-diphosphate. It participates in pyrimidine metabolism; UMP biosynthesis via de novo pathway; UMP from orotate: step 1/2. Its function is as follows. Catalyzes the transfer of a ribosyl phosphate group from 5-phosphoribose 1-diphosphate to orotate, leading to the formation of orotidine monophosphate (OMP). The polypeptide is Orotate phosphoribosyltransferase (Chlamydia pneumoniae (Chlamydophila pneumoniae)).